A 1349-amino-acid polypeptide reads, in one-letter code: MPHSRQPSISSSIMSQSNHNHPQKIGPWKLGKTLGRGATGRVLLATHQTTGQKAAVKVVSKSELQDEETEKNGDGLPYGIEREIIIMKLLTHPNVLRLYDVWETSKALYLVLEYVEGGELFDLLVERGPLPEVEAIKYFRQIILGTAYCHALGICHRDLKPENLLLDSQLNVKLADFGMAALESNGKLLETSCGSPHYAAPEIVSGLKYHGAASDVWSCGVILFALLTGRLPFDDENIRNLLLKVQAGNFEMPVDEVSREARDLIARMLEVDPMRRISTEKILRHPLLTKYPMSNEDLISEKSLPHPQTGYKSLGSVRNIDKQILSNLTILWNDRPEEEIVDCLLKDGSNPEKTFYALLMRYKHNQEDNTNNNSPKKSTSFNNKVVRSGSKYSLNGTPRRKRASHISVSRPTSFQYKSNPGAGATANRNSVARHSVASSANNSPRKSPYKSPYRSPYRSPYKSPSKRYSYNQSPTKSPYGRRSNSQRQFENEPLKAKPRNIYNEIVDAQSNFSLPPSLPPSLPSKDSRYMIDEPNQPQLQQPALSQVPENPIVDESPDLMQSAKISSGKRNSIIGKNNNNSNSNKRMSKRKSIRASMTTGLKRNSITMKLLSTYAKLSGDDDWEYMDKQTKRTSATFAALCDKIFNQEDYDEEDEQLVDPEEKEAKEYERLMELERKKHEAELKARRELEKKKRRQKRRSILSSKKLSIIVKNDADPNNSEQELVDEGIKQPKRQSKNLTALRALSEGNHASEELTLEDVENLKRRSASQPVPKRRQTPVLTRRPVSRLDPLWQAHENEQLDRAKDALEQEWRDSQKRSSTVSRKKVNRESMISVMDDIVEEDQGRVNRRSTRNTYYERERDYELPEPTVEDSNLTDDYMTEIRKSRLLNSQLNVRDPLNEKRKSEPKTLISNVQIPSVTRKSRNFTTSNKRLSVLSMYSTKESYRDLNSIINSPDENPEQHQNMNKPALRTSIADRLDKAGLAEPEYETETDGEDKVSVIDLDDHLADRRTSYYDGSGKRASRASTTKRYNVHSSSGQRPKSKVPDLPKNDYDDTFVSNSDEVHKRQYKSMVSDESSASDDVFDKIKLPDGKSTKSSIDELANGTSTSGHRKPKIRHSQPGPEMLIPHLNGGIESSQPMSKVRGNNSSGHDDSVPPPPPAHKVNKKPLDDKTNFPPPEVDPKRKGSFFRKLSWGSKKTIENNTNAATNTTTQQQLPSPAESKEEKPKSSFFRWFSSSNTPSAAEIRKFNTILPKHEMSTALFALLNSWSNFGLKDLRNDQVGYYITGAISKHNSFNLKSCKFRIKINQRDFNQKSEIVCVRVKGSKVTTDTLFSEIEKVLLKEGVLDK.

Low complexity predominate over residues 1–20 (MPHSRQPSISSSIMSQSNHN). The tract at residues 1-30 (MPHSRQPSISSSIMSQSNHNHPQKIGPWKL) is disordered. A phosphoserine mark is found at S10, S11, S12, and S15. A Protein kinase domain is found at 28–288 (WKLGKTLGRG…TEKILRHPLL (261 aa)). ATP is bound by residues 34-42 (LGRGATGRV) and K57. T69 bears the Phosphothreonine mark. The Proton acceptor role is filled by D158. A Phosphothreonine modification is found at T191. 3 positions are modified to phosphoserine: S294, S300, and S303. Disordered regions lie at residues 366–498 (QEDN…KAKP) and 510–532 (SNFSLPPSLPPSLPSKDSRYMID). Low complexity predominate over residues 369–384 (NTNNNSPKKSTSFNNK). S388, S390, and S393 each carry phosphoserine. A Phosphothreonine modification is found at T397. Composition is skewed to polar residues over residues 406-418 (ISVSRPTSFQYKS) and 426-442 (ANRNSVARHSVASSANN). 2 positions are modified to phosphoserine: S407 and S409. Position 412 is a phosphothreonine (T412). Position 413 is a phosphoserine (S413). Low complexity predominate over residues 443–470 (SPRKSPYKSPYRSPYRSPYKSPSKRYSY). S455, S469, S473, S477, and S485 each carry phosphoserine. Residues 471–488 (NQSPTKSPYGRRSNSQRQ) are compositionally biased toward polar residues. S556 carries the phosphoserine modification. The span at 570 to 585 (RNSIIGKNNNNSNSNK) shows a compositional bias: low complexity. Residues 570–593 (RNSIIGKNNNNSNSNKRMSKRKSI) form a disordered region. S634 bears the Phosphoserine mark. The stretch at 661 to 701 (EEKEAKEYERLMELERKKHEAELKARRELEKKKRRQKRRSI) forms a coiled coil. Positions 712–737 (KNDADPNNSEQELVDEGIKQPKRQSK) are disordered. Phosphoserine occurs at positions 720 and 746. Residues 756–798 (TLEDVENLKRRSASQPVPKRRQTPVLTRRPVSRLDPLWQAHEN) form a disordered region. Phosphothreonine is present on residues T778, T869, and T876. S891 carries the post-translational modification Phosphoserine. A Phosphothreonine modification is found at T941. A Phosphoserine modification is found at S973. Phosphothreonine is present on residues T990 and T992. S999 bears the Phosphoserine mark. The tract at residues 1011–1229 (RTSYYDGSGK…AESKEEKPKS (219 aa)) is disordered. Positions 1024 to 1040 (RASTTKRYNVHSSSGQR) are enriched in polar residues. Residues 1044 to 1053 (KVPDLPKNDY) are compositionally biased toward basic and acidic residues. Phosphothreonine is present on T1056. Phosphoserine occurs at positions 1059, 1074, 1077, 1078, 1080, and 1094. A compositionally biased stretch (basic and acidic residues) spans 1083–1094 (VFDKIKLPDGKS). T1095 carries the post-translational modification Phosphothreonine. Phosphoserine occurs at positions 1097 and 1098. The residue at position 1106 (T1106) is a Phosphothreonine. Positions 1134–1149 (IESSQPMSKVRGNNSS) are enriched in polar residues. S1154 is modified (phosphoserine). Low complexity predominate over residues 1202 to 1215 (NNTNAATNTTTQQQ). Phosphoserine is present on S1218.

Belongs to the protein kinase superfamily. CAMK Ser/Thr protein kinase family. NIM1 subfamily. Associates with the septin complex which consists of CDC3, CDC10, CDC11, CDC12, and SEP7. Post-translationally, hyperphosphorylated during mitosis at dozens of sites. Among these, 7 have perfect or minimal CDK consensus sites and are CDC28 targets.

It is found in the cytoplasm. It localises to the bud neck. It catalyses the reaction L-seryl-[protein] + ATP = O-phospho-L-seryl-[protein] + ADP + H(+). The catalysed reaction is L-threonyl-[protein] + ATP = O-phospho-L-threonyl-[protein] + ADP + H(+). Its function is as follows. Serine/threonine-protein kinase which regulates the localization and the function of the septins during mitosis. Involved in the formation of the septin ring but not the basal septin band. Phosphorylates septins CDC11 and SEP7. Required for the transition from pseudohyphae to hyphae. Acts upstream of IRS4 and INP51 in regulating cell wall integrity responses. Involved in propolis-induced cell death. The polypeptide is Serine/threonine-protein kinase GIN4 (GIN4) (Candida albicans (strain SC5314 / ATCC MYA-2876) (Yeast)).